Reading from the N-terminus, the 371-residue chain is MLSEDEKEKTPPSVMTSIPDDVIMECIAPRVPRYNHSMLSLVSKQFRSLVASPRLYKTRSLLGCTEDCVYVLIEDCILEVARWYSLNRRTKRNMPGTVENRLVLISSLPPMPTAASYVVVGSNIFVMGGRYDWNVEEWEAQPPSSIALCIDCRTHTTRLVADMPVGLMTNVSKVIDEKIYIVGRVWASATIVEFDLRTEKWADGTKPGWEADDRWLTSLSTTAGRGPSSFENNCDHKLMEDILMDKEEIKHYHLFDNECVMGNILYVYDRHKYILRTYDPKQRTWGVVKGLEKLPLGGDESYIVSRGKMLILFLIVVLEYDDDASFQKRELWCAEITVERREEGEIWGKVECCDLLLEGGLIIGSCLVVTL.

The F-box domain occupies 13–61 (SVMTSIPDDVIMECIAPRVPRYNHSMLSLVSKQFRSLVASPRLYKTRSL). 3 Kelch repeats span residues 123–165 (NIFV…DMPV), 178–229 (KIYI…GPSS), and 257–305 (NECV…YIVS).

The chain is Putative F-box/kelch-repeat protein At3g10510 from Arabidopsis thaliana (Mouse-ear cress).